The chain runs to 142 residues: uncharacterized protein (142 aa).

It belongs to the IIV-3 015R family.

This is an uncharacterized protein from Aedes vexans (Inland floodwater mosquito).